Consider the following 336-residue polypeptide: Protein-glutamate methylesterase/protein-glutamine glutaminase 2 (336 aa).

The Response regulatory domain occupies 2–119 (KIAIVNDMPM…PNPKEAAAPL (118 aa)). Asp-53 carries the 4-aspartylphosphate modification. In terms of domain architecture, CheB-type methylesterase spans 147 to 336 (PSRRDRLVAI…APRLIEVFTQ (190 aa)). Catalysis depends on residues Ser-159, His-186, and Asp-279.

This sequence belongs to the CheB family. Phosphorylated by CheA. Phosphorylation of the N-terminal regulatory domain activates the methylesterase activity.

It localises to the cytoplasm. The catalysed reaction is [protein]-L-glutamate 5-O-methyl ester + H2O = L-glutamyl-[protein] + methanol + H(+). The enzyme catalyses L-glutaminyl-[protein] + H2O = L-glutamyl-[protein] + NH4(+). Functionally, involved in chemotaxis. Part of a chemotaxis signal transduction system that modulates chemotaxis in response to various stimuli. Catalyzes the demethylation of specific methylglutamate residues introduced into the chemoreceptors (methyl-accepting chemotaxis proteins or MCP) by CheR. Also mediates the irreversible deamidation of specific glutamine residues to glutamic acid. The polypeptide is Protein-glutamate methylesterase/protein-glutamine glutaminase 2 (Pseudomonas syringae pv. syringae (strain B728a)).